The sequence spans 445 residues: Cytoplasmic tRNA 2-thiolation protein 2 (445 aa).

Positions 1–11 are enriched in acidic residues; that stretch reads MCSIGEDDFGD. The tract at residues 1–26 is disordered; sequence MCSIGEDDFGDEGGVHAMKEESPLPE. Positions 13–22 are enriched in basic and acidic residues; sequence GGVHAMKEES.

The protein belongs to the CTU2/NCS2 family.

It localises to the cytoplasm. It participates in tRNA modification; 5-methoxycarbonylmethyl-2-thiouridine-tRNA biosynthesis. Functionally, plays a central role in 2-thiolation of mcm(5)S(2)U at tRNA wobble positions of tRNA(Lys), tRNA(Glu) and tRNA(Gln). May act by forming a heterodimer with NCS6/CTU1 that ligates sulfur from thiocarboxylated URM1 onto the uridine of tRNAs at wobble position. This Aedes aegypti (Yellowfever mosquito) protein is Cytoplasmic tRNA 2-thiolation protein 2.